Reading from the N-terminus, the 101-residue chain is Histone H1-like protein EM6 (101 aa).

2 stretches are compositionally biased toward basic residues: residues 1–35 and 58–101; these read AKKR…HVRK and AKKK…RRRR. The interval 1–101 is disordered; the sequence is AKKRSRSRKR…SRTARSRRRR (101 aa). A run of 4 repeats spans residues 3-4, 5-6, 7-8, and 9-10. The tract at residues 3 to 22 is 10 X 2 AA approximate tandem repeats of [SK]-R; that stretch reads KRSRSRKRSASRKRSRSRKR. The 5; approximate repeat unit spans residues 11-12; it reads SA. 5 repeat units span residues 13-14, 15-16, 17-18, 19-20, and 21-22. The segment at 32–65 is globular; it reads HVRKALAAGMKNHLLAHPKGSNNFILAKKKAPRR.

In terms of tissue distribution, sperm.

The protein resides in the nucleus. It is found in the chromosome. This chain is Histone H1-like protein EM6, found in Ensis minor (Razor shell).